Consider the following 309-residue polypeptide: Tagatose-6-phosphate kinase (309 aa).

Belongs to the carbohydrate kinase PfkB family. LacC subfamily.

The catalysed reaction is D-tagatofuranose 6-phosphate + ATP = D-tagatofuranose 1,6-bisphosphate + ADP + H(+). It functions in the pathway carbohydrate metabolism; D-tagatose 6-phosphate degradation; D-glyceraldehyde 3-phosphate and glycerone phosphate from D-tagatose 6-phosphate: step 1/2. The sequence is that of Tagatose-6-phosphate kinase from Streptococcus pneumoniae (strain Hungary19A-6).